A 98-amino-acid polypeptide reads, in one-letter code: MEKKKVQKIKIGRVVSDKMDKTVVVAVEELVSHPLYKKTIRRTKKFKAHDEHNACRTGDIVKIAETRPLSKEKRWRVVEIIERGKVLGEEENLETIEG.

The protein belongs to the universal ribosomal protein uS17 family. In terms of assembly, part of the 30S ribosomal subunit.

Functionally, one of the primary rRNA binding proteins, it binds specifically to the 5'-end of 16S ribosomal RNA. This chain is Small ribosomal subunit protein uS17, found in Carboxydothermus hydrogenoformans (strain ATCC BAA-161 / DSM 6008 / Z-2901).